An 83-amino-acid chain; its full sequence is Mu-theraphotoxin-Hhn2g (83 aa).

Positions 1-21 are cleaved as a signal peptide; it reads MKASMYLALAGLVLLFVVGYA. A propeptide spanning residues 22 to 48 is cleaved from the precursor; it reads SESEEKEFPRELLSKIFAVDDFKGEER. 2 disulfides stabilise this stretch: cysteine 50–cysteine 65 and cysteine 57–cysteine 70. At leucine 81 the chain carries Leucine amide.

The protein belongs to the neurotoxin 10 (Hwtx-1) family. 15 (Hntx-3) subfamily. Monomer. As to expression, expressed by the venom gland.

Its subcellular location is the secreted. Lethal neurotoxin. Selectively blocks tetrodotoxin-sensitive voltage-gated sodium channels (Nav). Does not affect tetrodotoxin-resistant voltage-gated sodium channels or calcium channels. The chain is Mu-theraphotoxin-Hhn2g from Cyriopagopus hainanus (Chinese bird spider).